Here is a 212-residue protein sequence, read N- to C-terminus: MQEIFNRIFRDNKSIYTLSENNKRVYGEKIIRKKNSYLREWDPRRSKLAAAILKGFKHANFDKKLNILYLGASTGTTVSHLSDICISGRLYAVELSYDSFVKLYSLSQARNNIFPILEDANLVERYKFFVEKCDFIYQDIAQRNQVQIFNQNADIFKPRSAILIIKIKAISSKEPEKKILKETISSIRKYNIKEIIDLRPYDIGNYLVYMER.

Residues 76-77 (TT), 94-95 (EL), 119-120 (DA), and 139-142 (DIAQ) contribute to the S-adenosyl-L-methionine site.

The protein belongs to the methyltransferase superfamily. Fibrillarin family. As to quaternary structure, interacts with nop5. Component of box C/D small ribonucleoprotein (sRNP) particles that contain rpl7ae, FlpA and nop5, plus a guide RNA.

Its function is as follows. Involved in pre-rRNA and tRNA processing. Utilizes the methyl donor S-adenosyl-L-methionine to catalyze the site-specific 2'-hydroxyl methylation of ribose moieties in rRNA and tRNA. Site specificity is provided by a guide RNA that base pairs with the substrate. Methylation occurs at a characteristic distance from the sequence involved in base pairing with the guide RNA. The polypeptide is Fibrillarin-like rRNA/tRNA 2'-O-methyltransferase (Picrophilus torridus (strain ATCC 700027 / DSM 9790 / JCM 10055 / NBRC 100828 / KAW 2/3)).